The primary structure comprises 720 residues: MQNEIKKVCVIGSGVMGSGIAALIANSSHKVVLLDIIAKDSDDPNKIVKTAKENLHKQKPPPLSFPDKVNFITIGNLEHDLELIRDCDLVIEVIVEKLEIKHQLYNKIIPYLKEDAIIASNTSTLPLKRLKENLPDNIKSRFVITHFFNPPRYMELLELIIDSMVKFEVIERVSGFLTKTLGKTIVKCNDTPGFIANRVGCFLLELVARKAISQKLDFVALDKIFTICLGLPSTGIFGLYDLIGHDVMKLISSSLLAALPANDAYHKIYVNTPVLDKMIEKKLIGRKGEGGFYRLSVSNGKKIKEVININDLSYSSVQKVDISFNNLDELLVSDSVYGKIFTEIITEFYVYLASLVPSVTDNIYDIDAAMKLGYSWKYGPFELLTIAAKDGWNSVIKNADLMHIPLPQYLGNKEYQKIDKQKFNSHKDILQESQIVLENDSAKLINYRENFIFVITTKMNCLNHNVFYLLQEAASKAEKDGKNLYIYPQGNNFSAGADLKLLLSYIEDGNFHDLENLLKLGQQTMLHLKYSGVHIISCAKGVALGGGCELLLYSSYIVANQELNAGLVELGVGLIPGWGGVTEMFVRSKGDKTKLIRNVRNIIEQNKTSSADYFKSDYDVESMHVNMNKHYILDEALKLNLSKKIVPIPHKITLPKINLATEIDTSKYNDLQNKVLSKFQNIIDKHPDTNEEELLGYEREIFLELAKDPKTIEKLKAIVK.

The segment at 1 to 384 is 3-hydroxyacyl-CoA dehydrogenase; the sequence is MQNEIKKVCV…SWKYGPFELL (384 aa). Residues 453 to 720 form an enoyl-CoA hydratase/isomerase region; that stretch reads FVITTKMNCL…TIEKLKAIVK (268 aa).

This sequence in the N-terminal section; belongs to the 3-hydroxyacyl-CoA dehydrogenase family. The protein in the C-terminal section; belongs to the enoyl-CoA hydratase/isomerase family.

The enzyme catalyses a (3S)-3-hydroxyacyl-CoA + NAD(+) = a 3-oxoacyl-CoA + NADH + H(+). It catalyses the reaction a (3S)-3-hydroxyacyl-CoA = a (2E)-enoyl-CoA + H2O. The catalysed reaction is a 4-saturated-(3S)-3-hydroxyacyl-CoA = a (3E)-enoyl-CoA + H2O. It carries out the reaction a (3Z)-enoyl-CoA = a 4-saturated (2E)-enoyl-CoA. The enzyme catalyses a (3E)-enoyl-CoA = a 4-saturated (2E)-enoyl-CoA. The sequence is that of Putative fatty acid oxidation complex trifunctional enzyme from Rickettsia felis (strain ATCC VR-1525 / URRWXCal2) (Rickettsia azadi).